A 228-amino-acid polypeptide reads, in one-letter code: Gliolectin (228 aa).

The Cytoplasmic segment spans residues 1–120 (MLCPPMALGP…NPKAVSQAPR (120 aa)). A helical; Signal-anchor for type II membrane protein transmembrane segment spans residues 121–137 (GMALTPAQISASAKLIL). At 138 to 228 (QKCPESDRKK…GTSELADQKQ (91 aa)) the chain is on the extracellular side. The disordered stretch occupies residues 141 to 228 (PESDRKKSNG…GTSELADQKQ (88 aa)). Residues asparagine 149, asparagine 156, asparagine 198, asparagine 199, asparagine 205, and asparagine 218 are each glycosylated (N-linked (GlcNAc...) asparagine). Residues 195 to 213 (NNNNNSSSSNNNSNMNINN) are compositionally biased toward low complexity. Residues 218–228 (NGTSELADQKQ) are compositionally biased toward polar residues.

As to expression, expressed by a subset of glial cells found at the midline of the embryo stage 12 nervous system. Expression is highest during the formation of the embryonic axonal commissures, a process requiring midline glial cell function (at protein level).

It localises to the membrane. In terms of biological role, has a role in intercellular carbohydrate-mediated cell adhesion. The chain is Gliolectin from Drosophila melanogaster (Fruit fly).